The chain runs to 269 residues: Surfeit locus protein 4 (269 aa).

5 helical membrane-spanning segments follow: residues 64-84 (FLAT…CVLI), 92-112 (YACF…SILW), 179-199 (FFSI…AIGF), 203-223 (LAAL…NAFW), and 242-262 (TTSV…GVSM). The Di-lysine motif motif lies at 266–269 (KKEW).

This sequence belongs to the SURF4 family.

The protein resides in the endoplasmic reticulum membrane. Its subcellular location is the endoplasmic reticulum-Golgi intermediate compartment membrane. The protein localises to the golgi apparatus membrane. Functionally, endoplasmic reticulum cargo receptor that mediates the export of lipoproteins by recruiting cargos into COPII vesicles to facilitate their secretion. Acts as a cargo receptor for lipoproteins bearing both APOB and APOA1, thereby regulating lipoprotein delivery and the maintenance of lipid homeostasis. The sequence is that of Surfeit locus protein 4 from Takifugu rubripes (Japanese pufferfish).